A 460-amino-acid polypeptide reads, in one-letter code: Argininosuccinate lyase (460 aa).

Belongs to the lyase 1 family. Argininosuccinate lyase subfamily.

Its subcellular location is the cytoplasm. It catalyses the reaction 2-(N(omega)-L-arginino)succinate = fumarate + L-arginine. It functions in the pathway amino-acid biosynthesis; L-arginine biosynthesis; L-arginine from L-ornithine and carbamoyl phosphate: step 3/3. The chain is Argininosuccinate lyase from Streptococcus mutans serotype c (strain ATCC 700610 / UA159).